The chain runs to 271 residues: Probable endonuclease lcl3 (271 aa).

The interval 1 to 27 (MRWPWSGDDHEQNKSSRLWATSPKSSD) is disordered. Over residues 15–27 (SSRLWATSPKSSD) the composition is skewed to polar residues. The helical transmembrane segment at 38–55 (LIATLALTVSTVAGVRLY) threads the bilayer. The 161-residue stretch at 76–236 (KSLFGQVTSV…RDSKVGMWAK (161 aa)) folds into the TNase-like domain. Residue Arg127 is part of the active site. Asp132 contacts Ca(2+). Active-site residues include Glu135 and Arg175. Positions 226 to 271 (ARDSKVGMWAKPTLRQRLGGAPTQPPESPREYKNRHNAAEKLKKPG) are disordered. A compositionally biased stretch (basic and acidic residues) spans 253-271 (SPREYKNRHNAAEKLKKPG).

This sequence belongs to the LCL3 family.

It is found in the mitochondrion. The protein localises to the membrane. This Pyrenophora tritici-repentis (strain Pt-1C-BFP) (Wheat tan spot fungus) protein is Probable endonuclease lcl3 (lcl3).